A 161-amino-acid polypeptide reads, in one-letter code: Nucleotide-binding protein Lferr_1091 (161 aa).

Belongs to the YajQ family.

In terms of biological role, nucleotide-binding protein. This chain is Nucleotide-binding protein Lferr_1091, found in Acidithiobacillus ferrooxidans (strain ATCC 53993 / BNL-5-31) (Leptospirillum ferrooxidans (ATCC 53993)).